Reading from the N-terminus, the 367-residue chain is ELAV-like protein 3 (367 aa).

3 RRM domains span residues 39 to 117, 125 to 205, and 284 to 362; these read TNLI…YARP, ANLY…FANN, and WCIF…FKTS.

It belongs to the RRM elav family. In terms of assembly, interacts with MAP1B light chain LC1. In terms of tissue distribution, brain specific. Expressed in the hippocampus with expression in CA1, CA3 and dentate gyrus.

In terms of biological role, RNA-binding protein that binds to AU-rich element (ARE) sequences of target mRNAs, including VEGF mRNA. May also bind poly-A tracts via RRM 3. May be involved in neuronal differentiation and maintenance. Plays a role in the stabilization of GAP43 mRNA and in spatial learning. The sequence is that of ELAV-like protein 3 (Elavl3) from Mus musculus (Mouse).